The sequence spans 508 residues: Light-independent protochlorophyllide reductase subunit B (508 aa).

A [4Fe-4S] cluster-binding site is contributed by D36. D294 serves as the catalytic Proton donor. 429–430 (GM) lines the substrate pocket.

This sequence belongs to the ChlB/BchB/BchZ family. In terms of assembly, protochlorophyllide reductase is composed of three subunits; ChlL, ChlN and ChlB. Forms a heterotetramer of two ChlB and two ChlN subunits. Requires [4Fe-4S] cluster as cofactor.

It catalyses the reaction chlorophyllide a + oxidized 2[4Fe-4S]-[ferredoxin] + 2 ADP + 2 phosphate = protochlorophyllide a + reduced 2[4Fe-4S]-[ferredoxin] + 2 ATP + 2 H2O. It participates in porphyrin-containing compound metabolism; chlorophyll biosynthesis (light-independent). Its function is as follows. Component of the dark-operative protochlorophyllide reductase (DPOR) that uses Mg-ATP and reduced ferredoxin to reduce ring D of protochlorophyllide (Pchlide) to form chlorophyllide a (Chlide). This reaction is light-independent. The NB-protein (ChlN-ChlB) is the catalytic component of the complex. This Picosynechococcus sp. (strain ATCC 27264 / PCC 7002 / PR-6) (Agmenellum quadruplicatum) protein is Light-independent protochlorophyllide reductase subunit B.